We begin with the raw amino-acid sequence, 301 residues long: Quinolinate synthase (301 aa).

The iminosuccinate site is built by histidine 21 and serine 38. Cysteine 83 lines the [4Fe-4S] cluster pocket. Iminosuccinate-binding positions include 109 to 111 (YIN) and serine 126. Cysteine 169 contacts [4Fe-4S] cluster. Iminosuccinate contacts are provided by residues 195–197 (HPE) and threonine 212. A [4Fe-4S] cluster-binding site is contributed by cysteine 257.

The protein belongs to the quinolinate synthase family. Type 2 subfamily. The cofactor is [4Fe-4S] cluster.

The protein resides in the cytoplasm. It catalyses the reaction iminosuccinate + dihydroxyacetone phosphate = quinolinate + phosphate + 2 H2O + H(+). The protein operates within cofactor biosynthesis; NAD(+) biosynthesis; quinolinate from iminoaspartate: step 1/1. Functionally, catalyzes the condensation of iminoaspartate with dihydroxyacetone phosphate to form quinolinate. The sequence is that of Quinolinate synthase from Clostridium perfringens (strain 13 / Type A).